Consider the following 159-residue polypeptide: 3-hydroxyacyl-[acyl-carrier-protein] dehydratase FabZ (159 aa).

His-58 is an active-site residue.

Belongs to the thioester dehydratase family. FabZ subfamily.

It is found in the cytoplasm. It catalyses the reaction a (3R)-hydroxyacyl-[ACP] = a (2E)-enoyl-[ACP] + H2O. Functionally, involved in unsaturated fatty acids biosynthesis. Catalyzes the dehydration of short chain beta-hydroxyacyl-ACPs and long chain saturated and unsaturated beta-hydroxyacyl-ACPs. The polypeptide is 3-hydroxyacyl-[acyl-carrier-protein] dehydratase FabZ (Helicobacter pylori (strain G27)).